The primary structure comprises 232 residues: Large ribosomal subunit protein uL1 (232 aa).

This sequence belongs to the universal ribosomal protein uL1 family. In terms of assembly, part of the 50S ribosomal subunit.

Its function is as follows. Binds directly to 23S rRNA. The L1 stalk is quite mobile in the ribosome, and is involved in E site tRNA release. Protein L1 is also a translational repressor protein, it controls the translation of the L11 operon by binding to its mRNA. In Aromatoleum aromaticum (strain DSM 19018 / LMG 30748 / EbN1) (Azoarcus sp. (strain EbN1)), this protein is Large ribosomal subunit protein uL1.